Here is a 739-residue protein sequence, read N- to C-terminus: Catalase-peroxidase 2 (739 aa).

Positions 1-26 are cleaved as a signal peptide; that stretch reads MKKTTIPTLSALTLAMSLAFGGAAIA. The segment at residues 105-227 is a cross-link (tryptophyl-tyrosyl-methioninium (Trp-Tyr) (with M-253)); sequence WHSAGVYRIF…MGATQMGLIY (123 aa). Catalysis depends on histidine 106, which acts as the Proton acceptor. The tryptophyl-tyrosyl-methioninium (Tyr-Met) (with W-105) cross-link spans 227-253; sequence YVNPEGPNGVPDPLASAKEIRDTFGRM. Residue histidine 268 coordinates heme b.

This sequence belongs to the peroxidase family. Peroxidase/catalase subfamily. Homodimer or homotetramer. It depends on heme b as a cofactor. Formation of the three residue Trp-Tyr-Met cross-link is important for the catalase, but not the peroxidase activity of the enzyme.

It carries out the reaction H2O2 + AH2 = A + 2 H2O. The catalysed reaction is 2 H2O2 = O2 + 2 H2O. Functionally, bifunctional enzyme with both catalase and broad-spectrum peroxidase activity. In Shewanella sp. (strain MR-4), this protein is Catalase-peroxidase 2.